Here is a 110-residue protein sequence, read N- to C-terminus: UPF0132 membrane protein MJ1443 (110 aa).

3 helical membrane-spanning segments follow: residues 15–35 (IEGA…YILE), 49–69 (IILF…PYGW), and 70–90 (MLSG…MYKA).

It belongs to the UPF0132 family.

Its subcellular location is the cell membrane. This Methanocaldococcus jannaschii (strain ATCC 43067 / DSM 2661 / JAL-1 / JCM 10045 / NBRC 100440) (Methanococcus jannaschii) protein is UPF0132 membrane protein MJ1443.